A 196-amino-acid polypeptide reads, in one-letter code: dITP/XTP pyrophosphatase (196 aa).

Substrate is bound at residue 9–14 (TSNAGK). Residues Glu-39 and Asp-68 each coordinate Mg(2+). The active-site Proton acceptor is the Asp-68. Substrate-binding positions include Ser-69, 147–150 (FGYD), Lys-170, and 175–176 (HR).

Belongs to the HAM1 NTPase family. In terms of assembly, homodimer. Mg(2+) serves as cofactor.

The catalysed reaction is XTP + H2O = XMP + diphosphate + H(+). The enzyme catalyses dITP + H2O = dIMP + diphosphate + H(+). It catalyses the reaction ITP + H2O = IMP + diphosphate + H(+). Functionally, pyrophosphatase that catalyzes the hydrolysis of nucleoside triphosphates to their monophosphate derivatives, with a high preference for the non-canonical purine nucleotides XTP (xanthosine triphosphate), dITP (deoxyinosine triphosphate) and ITP. Seems to function as a house-cleaning enzyme that removes non-canonical purine nucleotides from the nucleotide pool, thus preventing their incorporation into DNA/RNA and avoiding chromosomal lesions. The chain is dITP/XTP pyrophosphatase from Nostoc sp. (strain PCC 7120 / SAG 25.82 / UTEX 2576).